Consider the following 253-residue polypeptide: MITKRIIPCLDVDMGRVVKGVNFVNLKDVGDPVEIAEFYNKEGADEIVFLDISATHEGRAIMIDVVRKTAEKLFIPLTVGGGIKNINDFRDILRAGADKISVNSSAIRNPKLIKKAAECFGSQCVVVAIDGKKRKDKDGWNVFINGGRIDTGLDAIEWARKVEKLGAGEILFTSMDADGTKEGYDLELTNEVSEAVNIPVIASGGCGKLKHFGEIFEKSSADAALAASLFHFKELSIKEVKNYLKKEGFSVRL.

Active-site residues include aspartate 11 and aspartate 130.

The protein belongs to the HisA/HisF family. Heterodimer of HisH and HisF.

It localises to the cytoplasm. The catalysed reaction is 5-[(5-phospho-1-deoxy-D-ribulos-1-ylimino)methylamino]-1-(5-phospho-beta-D-ribosyl)imidazole-4-carboxamide + L-glutamine = D-erythro-1-(imidazol-4-yl)glycerol 3-phosphate + 5-amino-1-(5-phospho-beta-D-ribosyl)imidazole-4-carboxamide + L-glutamate + H(+). It functions in the pathway amino-acid biosynthesis; L-histidine biosynthesis; L-histidine from 5-phospho-alpha-D-ribose 1-diphosphate: step 5/9. Functionally, IGPS catalyzes the conversion of PRFAR and glutamine to IGP, AICAR and glutamate. The HisF subunit catalyzes the cyclization activity that produces IGP and AICAR from PRFAR using the ammonia provided by the HisH subunit. This is Imidazole glycerol phosphate synthase subunit HisF from Clostridium botulinum (strain Langeland / NCTC 10281 / Type F).